A 795-amino-acid polypeptide reads, in one-letter code: Protein translocase subunit SecA 2 (795 aa).

ATP contacts are provided by residues Gln84, 102 to 106 (GEGKT), and Asp496.

It belongs to the SecA family. As to quaternary structure, monomer and homodimer. Part of the essential Sec protein translocation apparatus which comprises SecA, SecYEG and auxiliary proteins SecDF. Other proteins may also be involved.

Its subcellular location is the cell membrane. It is found in the cytoplasm. It catalyses the reaction ATP + H2O + cellular proteinSide 1 = ADP + phosphate + cellular proteinSide 2.. Functionally, part of the Sec protein translocase complex. Interacts with the SecYEG preprotein conducting channel. Has a central role in coupling the hydrolysis of ATP to the transfer of proteins into and across the cell membrane, serving as an ATP-driven molecular motor driving the stepwise translocation of polypeptide chains across the membrane. The sequence is that of Protein translocase subunit SecA 2 from Streptococcus agalactiae serotype V (strain ATCC BAA-611 / 2603 V/R).